The following is an 830-amino-acid chain: Nucleolar complex-associated protein 3 (830 aa).

Disordered regions lie at residues 1–22, 67–86, 112–169, 391–436, and 802–830; these read MGKN…DVAE, KYEE…GNGE, KSKL…EETP, GKPN…KIRD, and LQSE…KKQI. 2 coiled-coil regions span residues 61 to 81 and 111 to 156; these read VMTV…LQEE and KKSK…HEKD. Over residues 67-84 the composition is skewed to basic and acidic residues; the sequence is KYEEERSKRKTLQEEKGN. Acidic residues predominate over residues 118-129; it reads AETDEAEKDVLE. Basic and acidic residues predominate over residues 130–140; sequence DEHVLNKSQRR. Positions 138–145 match the Nuclear localization signal 1 motif; that stretch reads QRREKAKK. The span at 141-150 shows a compositional bias: basic residues; sequence EKAKKSKREA. Residues 159-168 are compositionally biased toward acidic residues; it reads DEILQEEEET. Positions 391–400 are enriched in basic and acidic residues; the sequence is GKPNKEDEHN. Residues 400-429 adopt a coiled-coil conformation; the sequence is NKKYKKNNKRKTQEEQNQVQENERKKSKKD. The short motif at 408-415 is the Nuclear localization signal 2 element; sequence KRKTQEEQ. A compositionally biased stretch (basic and acidic residues) spans 420-436; that stretch reads ENERKKSKKDMMSKIRD. A Nuclear localization signal 3 motif is present at residues 806–813; that stretch reads EKKPLKKQ. Basic residues predominate over residues 817 to 830; sequence VKKKLKNPKSKKQI.

Belongs to the CBF/MAK21 family. In terms of assembly, component of nucleolar complexes. Interacts with RBL and NOC2 in both the nucleolus and nucleoplasm.

Its subcellular location is the nucleus. The protein localises to the nucleolus. The protein resides in the nucleoplasm. In terms of biological role, may be required for synthesis of 60S ribosomal subunits and the transport of pre-ribosomes from the nucleoplasm to the cytoplasm. Also required for initiation of DNA replication. The chain is Nucleolar complex-associated protein 3 from Arabidopsis thaliana (Mouse-ear cress).